The chain runs to 265 residues: Protein Msed_2121 (265 aa).

It belongs to the CinA family.

The sequence is that of Protein Msed_2121 from Metallosphaera sedula (strain ATCC 51363 / DSM 5348 / JCM 9185 / NBRC 15509 / TH2).